The chain runs to 437 residues: UDP-N-acetylmuramate--L-alanine ligase (437 aa).

Residue 114–120 (GTHGKTS) participates in ATP binding.

This sequence belongs to the MurCDEF family.

Its subcellular location is the cytoplasm. The catalysed reaction is UDP-N-acetyl-alpha-D-muramate + L-alanine + ATP = UDP-N-acetyl-alpha-D-muramoyl-L-alanine + ADP + phosphate + H(+). Its pathway is cell wall biogenesis; peptidoglycan biosynthesis. In terms of biological role, cell wall formation. The chain is UDP-N-acetylmuramate--L-alanine ligase from Lactobacillus johnsonii (strain CNCM I-12250 / La1 / NCC 533).